Here is an 81-residue protein sequence, read N- to C-terminus: Translational regulator CsrA (81 aa).

This sequence belongs to the CsrA/RsmA family. Homodimer; the beta-strands of each monomer intercalate to form a hydrophobic core, while the alpha-helices form wings that extend away from the core.

Its subcellular location is the cytoplasm. In terms of biological role, a translational regulator that binds mRNA to regulate translation initiation and/or mRNA stability. Usually binds in the 5'-UTR at or near the Shine-Dalgarno sequence preventing ribosome-binding, thus repressing translation. Its main target seems to be the major flagellin gene, while its function is anatagonized by FliW. The chain is Translational regulator CsrA from Borreliella burgdorferi (strain ATCC 35210 / DSM 4680 / CIP 102532 / B31) (Borrelia burgdorferi).